Consider the following 863-residue polypeptide: Paramyosin (863 aa).

A nonhelical region region spans residues 1-26; it reads MSESHVKISRTIIRGTSPSTVRLESP. Residues 27–836 are a coiled coil; it reads VRELEDLLDL…ERTITIKRTI (810 aa). Residues 837 to 863 form a nonhelical region region; the sequence is GGPGSRAVSVVREINSVSRGNRATSIM.

The protein belongs to the paramyosin family. As to quaternary structure, homodimer.

It localises to the cytoplasm. The protein localises to the myofibril. Functionally, paramyosin is a major structural component of many thick filaments isolated from invertebrate muscles. This Echinococcus granulosus (Hydatid tapeworm) protein is Paramyosin.